The chain runs to 148 residues: MSEIKRLEINYKTDELFENFRAFGNKDLYMVNELNGQMIDASSDSPFYGIFVGDQLGARMALLKKGDVEEIYFPDFEDYILLWKLEVLPKYQNRGYASELIDFAKSFNMPIKAIGRNDSKDFFLHHGFTDVEAKNIEGHDVLLWKPIR.

Residues 7–148 (LEINYKTDEL…HDVLLWKPIR (142 aa)) enclose the N-acetyltransferase domain.

This is an uncharacterized protein from Staphylococcus aureus (strain Mu50 / ATCC 700699).